A 427-amino-acid polypeptide reads, in one-letter code: rRNA-processing protein EBP2 (427 aa).

2 stretches are compositionally biased toward basic and acidic residues: residues lysine 29 to proline 40 and lysine 49 to alanine 65. Positions lysine 29–histidine 190 are disordered. The stretch at alanine 45–valine 174 forms a coiled coil. The span at lysine 79–leucine 88 shows a compositional bias: basic residues. Basic and acidic residues predominate over residues lysine 89–glycine 105. Serine 104 carries the phosphoserine modification. A compositionally biased stretch (acidic residues) spans aspartate 106–glycine 126. Residues arginine 127 to serine 138 show a composition bias toward basic and acidic residues. 2 stretches are compositionally biased toward acidic residues: residues glutamate 139–aspartate 155 and glutamate 163–alanine 185. Serine 177 and serine 183 each carry phosphoserine. Coiled coils occupy residues lysine 234–lysine 265 and lysine 291–glutamate 348. The interval glutamate 361–phenylalanine 427 is disordered. A compositionally biased stretch (polar residues) spans alanine 397–serine 407. Positions arginine 409–phenylalanine 427 are enriched in basic residues.

Belongs to the EBP2 family. In terms of assembly, interacts with LOC1, NOP12, SIZ2, ULS1 and WSS1. Sumoylated.

It localises to the nucleus. Its subcellular location is the nucleolus. In terms of biological role, required for the processing of the 27S pre-rRNA. Probably involved in the step of the processing of the 27 SA precursor into the 27 SB intermediate. The chain is rRNA-processing protein EBP2 (EBP2) from Saccharomyces cerevisiae (strain ATCC 204508 / S288c) (Baker's yeast).